A 264-amino-acid polypeptide reads, in one-letter code: Small ribosomal subunit protein eS1 (264 aa).

Residue Lys34 is modified to N6-acetyllysine; alternate. Residue Lys34 forms a Glycyl lysine isopeptide (Lys-Gly) (interchain with G-Cter in SUMO2); alternate linkage. Position 56 is an N6-acetyllysine (Lys56). ADP-ribosyltyrosine is present on Tyr155. The segment at 232 to 264 (HGEGSSSGKATGDETGAKVERADGYEPPVQESV) is disordered. Phosphoserine is present on residues Ser236 and Ser237. Over residues 242–255 (TGDETGAKVERADG) the composition is skewed to basic and acidic residues. Residue Lys249 is modified to N6-acetyllysine; alternate. Lys249 is covalently cross-linked (Glycyl lysine isopeptide (Lys-Gly) (interchain with G-Cter in SUMO2); alternate). Tyr256 is modified (phosphotyrosine). The residue at position 263 (Ser263) is a Phosphoserine.

Belongs to the eukaryotic ribosomal protein eS1 family. As to quaternary structure, component of the small ribosomal subunit. Mature ribosomes consist of a small (40S) and a large (60S) subunit. The 40S subunit contains about 33 different proteins and 1 molecule of RNA (18S). The 60S subunit contains about 49 different proteins and 3 molecules of RNA (28S, 5.8S and 5S). Identified in a IGF2BP1-dependent mRNP granule complex containing untranslated mRNAs. Binds with high affinity to IPO4. Interacts with DDIT3. Part of the small subunit (SSU) processome, composed of more than 70 proteins and the RNA chaperone small nucleolar RNA (snoRNA) U3. In terms of processing, ADP-ribosylated at Tyr-155 by PARP1 in presence of HPF1.

The protein resides in the cytoplasm. Its subcellular location is the nucleus. It is found in the nucleolus. Component of the small ribosomal subunit. The ribosome is a large ribonucleoprotein complex responsible for the synthesis of proteins in the cell. Part of the small subunit (SSU) processome, first precursor of the small eukaryotic ribosomal subunit. During the assembly of the SSU processome in the nucleolus, many ribosome biogenesis factors, an RNA chaperone and ribosomal proteins associate with the nascent pre-rRNA and work in concert to generate RNA folding, modifications, rearrangements and cleavage as well as targeted degradation of pre-ribosomal RNA by the RNA exosome. May play a role during erythropoiesis through regulation of transcription factor DDIT3. This is Small ribosomal subunit protein eS1 from Macaca fascicularis (Crab-eating macaque).